A 414-amino-acid polypeptide reads, in one-letter code: 3-oxoacyl-[acyl-carrier-protein] synthase 2 (414 aa).

The 408-residue stretch at 4-411 (NKRVVITGMG…GHNAVLVFKK (408 aa)) folds into the Ketosynthase family 3 (KS3) domain. Active-site for beta-ketoacyl synthase activity residues include Cys165, His304, and His341.

This sequence belongs to the thiolase-like superfamily. Beta-ketoacyl-ACP synthases family.

It catalyses the reaction a fatty acyl-[ACP] + malonyl-[ACP] + H(+) = a 3-oxoacyl-[ACP] + holo-[ACP] + CO2. The catalysed reaction is (9Z)-hexadecenoyl-[ACP] + malonyl-[ACP] + H(+) = 3-oxo-(11Z)-octadecenoyl-[ACP] + holo-[ACP] + CO2. The protein operates within lipid metabolism; fatty acid biosynthesis. Involved in the type II fatty acid elongation cycle. Catalyzes the elongation of a wide range of acyl-ACP by the addition of two carbons from malonyl-ACP to an acyl acceptor. Can efficiently catalyze the conversion of palmitoleoyl-ACP (cis-hexadec-9-enoyl-ACP) to cis-vaccenoyl-ACP (cis-octadec-11-enoyl-ACP), an essential step in the thermal regulation of fatty acid composition. This is 3-oxoacyl-[acyl-carrier-protein] synthase 2 (fabF) from Staphylococcus aureus (strain Mu50 / ATCC 700699).